A 1299-amino-acid polypeptide reads, in one-letter code: DNA-directed RNA polymerase subunit beta' (1299 aa).

Residues C60, C62, C75, and C78 each coordinate Zn(2+). Mg(2+)-binding residues include D535, D537, and D539. Zn(2+)-binding residues include C877, C954, C961, and C964.

Belongs to the RNA polymerase beta' chain family. The RNAP catalytic core consists of 2 alpha, 1 beta, 1 beta' and 1 omega subunit. When a sigma factor is associated with the core the holoenzyme is formed, which can initiate transcription. Mg(2+) is required as a cofactor. The cofactor is Zn(2+).

The catalysed reaction is RNA(n) + a ribonucleoside 5'-triphosphate = RNA(n+1) + diphosphate. Its function is as follows. DNA-dependent RNA polymerase catalyzes the transcription of DNA into RNA using the four ribonucleoside triphosphates as substrates. This is DNA-directed RNA polymerase subunit beta' from Paenarthrobacter aurescens (strain TC1).